The following is a 1377-amino-acid chain: DNA-directed RNA polymerase subunit beta' (1377 aa).

4 residues coordinate Zn(2+): C70, C72, C85, and C88. Residues D460, D462, and D464 each coordinate Mg(2+). Zn(2+) is bound by residues C808, C882, C889, and C892.

The protein belongs to the RNA polymerase beta' chain family. As to quaternary structure, the RNAP catalytic core consists of 2 alpha, 1 beta, 1 beta' and 1 omega subunit. When a sigma factor is associated with the core the holoenzyme is formed, which can initiate transcription. It depends on Mg(2+) as a cofactor. Zn(2+) serves as cofactor.

It carries out the reaction RNA(n) + a ribonucleoside 5'-triphosphate = RNA(n+1) + diphosphate. Its function is as follows. DNA-dependent RNA polymerase catalyzes the transcription of DNA into RNA using the four ribonucleoside triphosphates as substrates. The polypeptide is DNA-directed RNA polymerase subunit beta' (Geotalea daltonii (strain DSM 22248 / JCM 15807 / FRC-32) (Geobacter daltonii)).